Consider the following 489-residue polypeptide: Putative ABC transporter ATP-binding protein TDE_0282 (489 aa).

2 consecutive ABC transporter domains span residues Ile2–Leu241 and Phe269–Glu487. Residues Gly36 to Thr43 and Gly301 to Thr308 each bind ATP.

The protein belongs to the ABC transporter superfamily.

It is found in the cell inner membrane. Functionally, probably part of an ABC transporter complex. Responsible for energy coupling to the transport system. The protein is Putative ABC transporter ATP-binding protein TDE_0282 of Treponema denticola (strain ATCC 35405 / DSM 14222 / CIP 103919 / JCM 8153 / KCTC 15104).